The following is a 135-amino-acid chain: Large ribosomal subunit protein uL16c (135 aa).

This sequence belongs to the universal ribosomal protein uL16 family. Part of the 50S ribosomal subunit.

It localises to the plastid. The protein localises to the chloroplast. The sequence is that of Large ribosomal subunit protein uL16c from Gossypium hirsutum (Upland cotton).